Consider the following 145-residue polypeptide: Large ribosomal subunit protein bL17 (145 aa).

The protein belongs to the bacterial ribosomal protein bL17 family. Part of the 50S ribosomal subunit. Contacts protein L32.

The chain is Large ribosomal subunit protein bL17 from Francisella tularensis subsp. holarctica (strain FTNF002-00 / FTA).